Consider the following 419-residue polypeptide: Acyl-[acyl-carrier-protein] hydrolase FATB1, chloroplastic (419 aa).

The N-terminal 50 residues, 1–50, are a transit peptide targeting the chloroplast; the sequence is MVAAAATSAFFPVPAPGTSPKPGKSGNWPSSLSPTFKPKSIPNGGFQVKA. The tract at residues 1-84 is disordered; it reads MVAAAATSAF…DTSSSPPPRA (84 aa). The segment covering 61–78 has biased composition (polar residues); it reads SAVNLKSGSLNTQEDTSS. Active-site residues include Asn-315, His-317, and Cys-352. Positions 390 to 419 are disordered; the sequence is SRTEWRPKNAGTNGAISTSTAKTSNGNSVS. The segment covering 399–419 has biased composition (polar residues); that stretch reads AGTNGAISTSTAKTSNGNSVS.

Belongs to the acyl-ACP thioesterase family.

It is found in the plastid. The protein localises to the chloroplast. The catalysed reaction is octanoyl-[ACP] + H2O = octanoate + holo-[ACP] + H(+). The enzyme catalyses decanoyl-[ACP] + H2O = decanoate + holo-[ACP] + H(+). Functionally, plays an essential role in chain termination during de novo fatty acid synthesis. Possesses thioesterase activity for short chain acyl-ACPs. Substrate preference is 8:0 &gt; 10:0. In Cuphea viscosissima (Blue waxweed), this protein is Acyl-[acyl-carrier-protein] hydrolase FATB1, chloroplastic.